Reading from the N-terminus, the 163-residue chain is Small ribosomal subunit protein uS5 (163 aa).

In terms of domain architecture, S5 DRBM spans 8-71; it reads LVEKIVYLNR…ERAKKDMVQI (64 aa).

The protein belongs to the universal ribosomal protein uS5 family. As to quaternary structure, part of the 30S ribosomal subunit. Contacts proteins S4 and S8.

In terms of biological role, with S4 and S12 plays an important role in translational accuracy. Located at the back of the 30S subunit body where it stabilizes the conformation of the head with respect to the body. In Nitratidesulfovibrio vulgaris (strain DSM 19637 / Miyazaki F) (Desulfovibrio vulgaris), this protein is Small ribosomal subunit protein uS5.